Consider the following 408-residue polypeptide: Succinylornithine transaminase (408 aa).

K252 carries the N6-(pyridoxal phosphate)lysine modification.

The protein belongs to the class-III pyridoxal-phosphate-dependent aminotransferase family. AstC subfamily. Pyridoxal 5'-phosphate serves as cofactor.

It carries out the reaction N(2)-succinyl-L-ornithine + 2-oxoglutarate = N-succinyl-L-glutamate 5-semialdehyde + L-glutamate. The protein operates within amino-acid degradation; L-arginine degradation via AST pathway; L-glutamate and succinate from L-arginine: step 3/5. Catalyzes the transamination of N(2)-succinylornithine and alpha-ketoglutarate into N(2)-succinylglutamate semialdehyde and glutamate. Can also act as an acetylornithine aminotransferase. This Salmonella paratyphi A (strain ATCC 9150 / SARB42) protein is Succinylornithine transaminase.